The following is a 224-amino-acid chain: Flagellar L-ring protein (224 aa).

Positions 1–15 (MARYFILAVALLLTA) are cleaved as a signal peptide. Cys16 carries N-palmitoyl cysteine lipidation. Cys16 carries S-diacylglycerol cysteine lipidation.

This sequence belongs to the FlgH family. As to quaternary structure, the basal body constitutes a major portion of the flagellar organelle and consists of four rings (L,P,S, and M) mounted on a central rod.

Its subcellular location is the cell outer membrane. It localises to the bacterial flagellum basal body. Assembles around the rod to form the L-ring and probably protects the motor/basal body from shearing forces during rotation. The polypeptide is Flagellar L-ring protein (Shewanella sp. (strain MR-7)).